A 517-amino-acid polypeptide reads, in one-letter code: Maturase K (517 aa).

It belongs to the intron maturase 2 family. MatK subfamily.

Its subcellular location is the plastid. The protein resides in the chloroplast. Its function is as follows. Usually encoded in the trnK tRNA gene intron. Probably assists in splicing its own and other chloroplast group II introns. The sequence is that of Maturase K from Caryota mitis (Burmese fishtail palm).